The sequence spans 425 residues: Tol-Pal system protein TolB (425 aa).

Positions 1–23 are cleaved as a signal peptide; it reads MQMMKKRILLCLLVGMTCLPVLA.

Belongs to the TolB family. In terms of assembly, the Tol-Pal system is composed of five core proteins: the inner membrane proteins TolA, TolQ and TolR, the periplasmic protein TolB and the outer membrane protein Pal. They form a network linking the inner and outer membranes and the peptidoglycan layer.

It localises to the periplasm. In terms of biological role, part of the Tol-Pal system, which plays a role in outer membrane invagination during cell division and is important for maintaining outer membrane integrity. This chain is Tol-Pal system protein TolB, found in Albidiferax ferrireducens (strain ATCC BAA-621 / DSM 15236 / T118) (Rhodoferax ferrireducens).